Reading from the N-terminus, the 170-residue chain is MKVIIASQNPAKIAAVESAFNLAFPNDTFSFEGVSVKSGVPDQPMSCEETKQGAINRVNNAKIKLPNCDYYVGLEAGIEGNSTFAWMIIDNGLTVGESRSSSLPLPPQVIDEVKKGKELGDVMDEQFNTDNIKQKGGAIGLLTNNLLTRTSVYQQALILALIPFLHPTRF.

It belongs to the YjjX NTPase family. In terms of assembly, homodimer. Mg(2+) is required as a cofactor. Requires Mn(2+) as cofactor.

The enzyme catalyses XTP + H2O = XDP + phosphate + H(+). The catalysed reaction is ITP + H2O = IDP + phosphate + H(+). Phosphatase that hydrolyzes non-canonical purine nucleotides such as XTP and ITP to their respective diphosphate derivatives. Probably excludes non-canonical purines from DNA/RNA precursor pool, thus preventing their incorporation into DNA/RNA and avoiding chromosomal lesions. The protein is Inosine/xanthosine triphosphatase of Aliivibrio fischeri (strain MJ11) (Vibrio fischeri).